Reading from the N-terminus, the 410-residue chain is WD repeat and FYVE domain-containing protein 1 (410 aa).

WD repeat units follow at residues glycine 22–proline 61, threonine 66–asparagine 105, alanine 112–glycine 150, phenylalanine 153–isoleucine 192, glycine 197–leucine 236, and glycine 240–proline 279. The FYVE-type zinc finger occupies tryptophan 281–lysine 352. Zn(2+) contacts are provided by cysteine 287, cysteine 290, cysteine 314, cysteine 317, cysteine 322, cysteine 325, cysteine 344, and cysteine 347. The WD 7 repeat unit spans residues glutamate 364–leucine 403. The residue at position 408 (serine 408) is a Phosphoserine.

In terms of assembly, binds PtdIns3P in vitro with high specificity over other phosphoinositides. Interacts (via WD repeat 2) with tyrosine-phosphorylated TLR3 (via TIR domain) in response to poly(I:C). Interacts with TLR4 in response to LPS. Interacts with TICAM1 in response to poly(I:C).

Its subcellular location is the early endosome. Functionally, positively regulates TLR3- and TLR4-mediated signaling pathways by bridging the interaction between TLR3 or TLR4 and TICAM1. Promotes TLR3/4 ligand-induced activation of transcription factors IRF3 and NF-kappa-B, as well as the production of IFN-beta and inflammatory cytokines. This Mus musculus (Mouse) protein is WD repeat and FYVE domain-containing protein 1 (Wdfy1).